A 204-amino-acid chain; its full sequence is Large ribosomal subunit protein bL25 (204 aa).

Ser-123 is subject to Phosphoserine.

The protein belongs to the bacterial ribosomal protein bL25 family. CTC subfamily. As to quaternary structure, part of the 50S ribosomal subunit; part of the 5S rRNA/L5/L18/L25 subcomplex. Contacts the 5S rRNA. Binds to the 5S rRNA independently of L5 and L18.

This is one of the proteins that binds to the 5S RNA in the ribosome where it forms part of the central protuberance. This is Large ribosomal subunit protein bL25 from Pseudomonas aeruginosa (strain UCBPP-PA14).